A 117-amino-acid chain; its full sequence is Calcitonin receptor-stimulating peptide 2 (117 aa).

The signal sequence occupies residues 1-25 (MGFWKFPPFLVLSILVLYQAGMFHT). Positions 26 to 79 (APVRLPLESSFDSATLTEEEVSLLLVAMVKDYVQMKATVLEQESEDFSITAQEK) are excised as a propeptide. A disulfide bridge links Cys81 with Cys86.

Belongs to the calcitonin family. Mainly expressed in the thyroid gland and CNS. Found in the nerve cells of the cerebrum, hippocampus, hypothalamus, pons/midbrain and thalamus. Also detected in the glia-like cells of pons/midbrain and in meninx of tactus opticus.

Its subcellular location is the secreted. The chain is Calcitonin receptor-stimulating peptide 2 (CRSP2) from Sus scrofa (Pig).